Consider the following 458-residue polypeptide: tRNA modification GTPase MnmE (458 aa).

The (6S)-5-formyl-5,6,7,8-tetrahydrofolate site is built by Arg22, Glu84, and Arg123. One can recognise a TrmE-type G domain in the interval 220–379 (GISTAIIGRP…LEKAIADLFF (160 aa)). Residue Asn230 participates in K(+) binding. GTP contacts are provided by residues 230-235 (NVGKSS), 249-255 (TDIAGTT), and 274-277 (DTAG). Ser234 is a Mg(2+) binding site. Residues Thr249, Ile251, and Thr254 each contribute to the K(+) site. Position 255 (Thr255) interacts with Mg(2+). Lys458 contacts (6S)-5-formyl-5,6,7,8-tetrahydrofolate.

The protein belongs to the TRAFAC class TrmE-Era-EngA-EngB-Septin-like GTPase superfamily. TrmE GTPase family. As to quaternary structure, homodimer. Heterotetramer of two MnmE and two MnmG subunits. K(+) serves as cofactor.

It localises to the cytoplasm. Functionally, exhibits a very high intrinsic GTPase hydrolysis rate. Involved in the addition of a carboxymethylaminomethyl (cmnm) group at the wobble position (U34) of certain tRNAs, forming tRNA-cmnm(5)s(2)U34. This Bacillus mycoides (strain KBAB4) (Bacillus weihenstephanensis) protein is tRNA modification GTPase MnmE.